The sequence spans 525 residues: Mitogen-activated protein kinase kinase 5 (525 aa).

The Protein kinase domain maps to 59-317; that stretch reads ETEGGFLGKG…CTELLRHPFI (259 aa). ATP is bound by residues 65–73 and Lys-88; that span reads LGKGSSGSV. Asp-178 acts as the Proton acceptor in catalysis. A compositionally biased stretch (low complexity) spans 358-367; that stretch reads SALPLASEGG. Disordered stretches follow at residues 358–392 and 438–468; these read SALPLASEGGTPKATSPSPAPVSPLTLSCPLERHD and SASVATDSGEGGGAAGVSAASLDNGQAAQHR.

It belongs to the protein kinase superfamily. STE Ser/Thr protein kinase family. MAP kinase kinase subfamily. The cofactor is Mg(2+).

It catalyses the reaction L-tyrosyl-[protein] + ATP = O-phospho-L-tyrosyl-[protein] + ADP + H(+). The catalysed reaction is L-seryl-[protein] + ATP = O-phospho-L-seryl-[protein] + ADP + H(+). The enzyme catalyses L-threonyl-[protein] + ATP = O-phospho-L-threonyl-[protein] + ADP + H(+). Functionally, protein kinase which phosphorylates and activates MPK4 in vitro. The polypeptide is Mitogen-activated protein kinase kinase 5 (Leishmania mexicana).